The following is a 216-amino-acid chain: Protein Syd (216 aa).

This sequence belongs to the Syd family.

The protein resides in the cell inner membrane. Functionally, interacts with the SecY protein in vivo. May bind preferentially to an uncomplexed state of SecY, thus functioning either as a chelating agent for excess SecY in the cell or as a regulatory factor that negatively controls the translocase function. The protein is Protein Syd of Shewanella frigidimarina (strain NCIMB 400).